We begin with the raw amino-acid sequence, 339 residues long: Glycerol-3-phosphate dehydrogenase [NAD(P)+] (339 aa).

NADPH is bound by residues Ser14, Tyr15, His35, and Lys109. Sn-glycerol 3-phosphate contacts are provided by Lys109, Gly138, and Thr140. NADPH is bound at residue Ala142. 5 residues coordinate sn-glycerol 3-phosphate: Lys194, Asp247, Ser257, Arg258, and Asn259. Catalysis depends on Lys194, which acts as the Proton acceptor. Position 258 (Arg258) interacts with NADPH. NADPH-binding residues include Val282 and Glu284.

It belongs to the NAD-dependent glycerol-3-phosphate dehydrogenase family.

Its subcellular location is the cytoplasm. The catalysed reaction is sn-glycerol 3-phosphate + NAD(+) = dihydroxyacetone phosphate + NADH + H(+). It carries out the reaction sn-glycerol 3-phosphate + NADP(+) = dihydroxyacetone phosphate + NADPH + H(+). It functions in the pathway membrane lipid metabolism; glycerophospholipid metabolism. Its function is as follows. Catalyzes the reduction of the glycolytic intermediate dihydroxyacetone phosphate (DHAP) to sn-glycerol 3-phosphate (G3P), the key precursor for phospholipid synthesis. The polypeptide is Glycerol-3-phosphate dehydrogenase [NAD(P)+] (Shewanella amazonensis (strain ATCC BAA-1098 / SB2B)).